A 511-amino-acid polypeptide reads, in one-letter code: MVLNFLSPSLSRLGLWASVVILMVIVLKLFSLLLRRQKLARAMDSFPGPPTHWLFGHALEIQKLGSLDKVVSWAQQFPHAHPLWFGQFVGFLNIYEPDYAKAVYSRGDPKAADVYDFFLQWIGKGLLVLDGPKWFQHRKLLTPGFHYDVLKPYVAIFAESTRMMLDKWEKKASENKSFDIFCDVGHMALDTLMKCTFGKGDSGLGHRDNSYYLAVSDLTLLMQQRIDSFQYHNDFIYWLTPHGRRFLRACKIAHDHTDEVIRQRKAALQDEKERKKIQQRRHLDFLDILLGVRDESGIKLSDAELRAEVDTFMFEGHDTTTSGISWFLYCMALYPEHQQLCREEVRGILGDQDSFQWDDLAKMTYLTMCMKECFRLYPPVPQVYRQLNKPVTFVDGRSLPAGSLISLHIYALHRNSTVWPDPEVFDPLRFSPENAAGRHPFAFMPFSAGPRNCIGQQFAMNEMKVVTALCLLRFEFSLDPSKMPIKVPQLILRSKNGIHLYLKPLASRSGK.

Residues Glu-315 and Cys-453 each coordinate heme.

The protein belongs to the cytochrome P450 family. Heme serves as cofactor.

Its subcellular location is the endoplasmic reticulum membrane. It localises to the microsome membrane. The catalysed reaction is an organic molecule + reduced [NADPH--hemoprotein reductase] + O2 = an alcohol + oxidized [NADPH--hemoprotein reductase] + H2O + H(+). Its function is as follows. Cytochromes P450 are a group of heme-thiolate monooxygenases. In liver microsomes, this enzyme is involved in an NADPH-dependent electron transport pathway. It oxidizes a variety of structurally unrelated compounds, including steroids, fatty acids, and xenobiotics. This Rattus norvegicus (Rat) protein is Cytochrome P450 4B1 (Cyp4b1).